A 316-amino-acid chain; its full sequence is Acetyl-coenzyme A carboxylase carboxyl transferase subunit beta (316 aa).

A CoA carboxyltransferase N-terminal domain is found at 39–308 (LWHKCSKCGV…PPHMVLWETM (270 aa)). Cys43, Cys46, Cys62, and Cys65 together coordinate Zn(2+). Residues 43–65 (CSKCGVLAYTKDLKANQMVCIEC) form a C4-type zinc finger.

Belongs to the AccD/PCCB family. Acetyl-CoA carboxylase is a heterohexamer composed of biotin carboxyl carrier protein (AccB), biotin carboxylase (AccC) and two subunits each of ACCase subunit alpha (AccA) and ACCase subunit beta (AccD). Zn(2+) serves as cofactor.

The protein resides in the cytoplasm. It catalyses the reaction N(6)-carboxybiotinyl-L-lysyl-[protein] + acetyl-CoA = N(6)-biotinyl-L-lysyl-[protein] + malonyl-CoA. Its pathway is lipid metabolism; malonyl-CoA biosynthesis; malonyl-CoA from acetyl-CoA: step 1/1. Component of the acetyl coenzyme A carboxylase (ACC) complex. Biotin carboxylase (BC) catalyzes the carboxylation of biotin on its carrier protein (BCCP) and then the CO(2) group is transferred by the transcarboxylase to acetyl-CoA to form malonyl-CoA. This chain is Acetyl-coenzyme A carboxylase carboxyl transferase subunit beta, found in Nostoc punctiforme (strain ATCC 29133 / PCC 73102).